The sequence spans 290 residues: MEPISYVTITDYTAFANWLLSTTTVTDVRFWDRIGGFFNLTASNGRLLDLSRRAYVHWNLRVHGHFSELCTVGGGVERTPLFRALTLRAWNSEPERVLRTIRELRTEKLHERGDYWGRNLEYMCTNILAETPEPIFRTLCHTRIIPELKRLVTTWKVYITAMYAGRHDDLVLQVTYFIRRSIEVDRPLLEFIGELKHSCSLPISRKMTTDKTFHVSGFITTTCTKELDRDDTARLVHRNGTGFETVVDRIVWGATMWWYRRTYRAVESYDEFWYKYCGWMDTPTGELPDE.

This is an uncharacterized protein from Ictalurid herpesvirus 1 (strain Auburn) (IcHV-1).